The primary structure comprises 379 residues: MSEFLPFSRPAMGVEELAAVKEVLESGWITTGPKNQALEQAFCQLTGNQHAIAVSSATAGMHITLMALEIGKGDEVITPSLTWVSTLNMISLLGATPVMVDVDRDTLMVTPEAIESAITPRTKAIIPVHYAGAPADIDAIRAIGERYGIAVIEDAAHAVGTYYKGRHIGAKGTAIFSFHAIKNITCAEGGLIVTDNENLARQLRMLKFHGLGVDAYDRQTWGRAPQAEVLTPGYKYNLTDINAAIAMTQLAKLEYLNTRRREIALQYQQALAALPFQPLSLPAWPHVHAWHLFIIRVDEQRCGISRNALMEALKERGIGTGLHFRAAHTQKYYRERFPTLSLPNTEWNSERICSLPLFPDMTTADADRVITALQQLAGQ.

Position 182 is an N6-(pyridoxal phosphate)lysine (lysine 182).

This sequence belongs to the DegT/DnrJ/EryC1 family. ArnB subfamily. As to quaternary structure, homodimer. Pyridoxal 5'-phosphate serves as cofactor.

It catalyses the reaction UDP-4-amino-4-deoxy-beta-L-arabinose + 2-oxoglutarate = UDP-beta-L-threo-pentopyranos-4-ulose + L-glutamate. It functions in the pathway nucleotide-sugar biosynthesis; UDP-4-deoxy-4-formamido-beta-L-arabinose biosynthesis; UDP-4-deoxy-4-formamido-beta-L-arabinose from UDP-alpha-D-glucuronate: step 2/3. It participates in bacterial outer membrane biogenesis; lipopolysaccharide biosynthesis. Its function is as follows. Catalyzes the conversion of UDP-4-keto-arabinose (UDP-Ara4O) to UDP-4-amino-4-deoxy-L-arabinose (UDP-L-Ara4N). The modified arabinose is attached to lipid A and is required for resistance to polymyxin and cationic antimicrobial peptides. This chain is UDP-4-amino-4-deoxy-L-arabinose--oxoglutarate aminotransferase, found in Escherichia coli (strain ATCC 8739 / DSM 1576 / NBRC 3972 / NCIMB 8545 / WDCM 00012 / Crooks).